A 218-amino-acid chain; its full sequence is Ribosomal RNA large subunit methyltransferase E (218 aa).

Positions 64, 66, 92, 108, and 133 each coordinate S-adenosyl-L-methionine. Residue lysine 173 is the Proton acceptor of the active site.

This sequence belongs to the class I-like SAM-binding methyltransferase superfamily. RNA methyltransferase RlmE family.

The protein localises to the cytoplasm. The catalysed reaction is uridine(2552) in 23S rRNA + S-adenosyl-L-methionine = 2'-O-methyluridine(2552) in 23S rRNA + S-adenosyl-L-homocysteine + H(+). Specifically methylates the uridine in position 2552 of 23S rRNA at the 2'-O position of the ribose in the fully assembled 50S ribosomal subunit. In Paracidovorax citrulli (strain AAC00-1) (Acidovorax citrulli), this protein is Ribosomal RNA large subunit methyltransferase E.